Consider the following 548-residue polypeptide: Lipase 2 (548 aa).

The signal sequence occupies residues 1 to 14 (MKLCLLALGAAVAA). A disulfide bridge links cysteine 74 with cysteine 111. Residue serine 223 is the Acyl-ester intermediate of the active site. The cysteines at positions 282 and 291 are disulfide-linked. Residue glutamate 355 is the Charge relay system of the active site. Asparagine 365 carries N-linked (GlcNAc...) asparagine glycosylation. Residue histidine 463 is the Charge relay system of the active site.

The protein belongs to the type-B carboxylesterase/lipase family.

It catalyses the reaction a triacylglycerol + H2O = a diacylglycerol + a fatty acid + H(+). The chain is Lipase 2 (LIP2) from Diutina rugosa (Yeast).